Consider the following 506-residue polypeptide: Anaerobic nitric oxide reductase transcription regulator NorR (506 aa).

The residue at position 57 (aspartate 57) is a 4-aspartylphosphate. Residues 187-416 (MIGLSPAMTQ…LEHAIHRAVV (230 aa)) form the Sigma-54 factor interaction domain. ATP-binding positions include 215–222 (GETGTGKE) and 278–287 (ADNGTLFLDE). Positions 481-500 (WAASARALETDVANLHRLAK) form a DNA-binding region, H-T-H motif.

Its pathway is nitrogen metabolism; nitric oxide reduction. In terms of biological role, required for the expression of anaerobic nitric oxide (NO) reductase, acts as a transcriptional activator for at least the norVW operon. Activation also requires sigma-54. The polypeptide is Anaerobic nitric oxide reductase transcription regulator NorR (Salmonella newport (strain SL254)).